Reading from the N-terminus, the 151-residue chain is Transcriptional regulator MraZ (151 aa).

SpoVT-AbrB domains lie at 5–52 (ANAI…PLDE) and 81–124 (AVDL…DEDA).

The protein belongs to the MraZ family. In terms of assembly, forms oligomers.

Its subcellular location is the cytoplasm. It is found in the nucleoid. This Pseudomonas fluorescens (strain Pf0-1) protein is Transcriptional regulator MraZ.